Reading from the N-terminus, the 494-residue chain is Ribonuclease H (494 aa).

Disordered regions lie at residues asparagine 79–proline 148 and arginine 205–arginine 231. 2 stretches are compositionally biased toward polar residues: residues glycine 84–alanine 100 and proline 131–serine 143. The RNase H type-1 domain maps to serine 272–arginine 488. Mg(2+) contacts are provided by aspartate 281, glutamate 325, aspartate 374, and aspartate 480.

This sequence belongs to the RNase H family. As to quaternary structure, monomer. It depends on Mg(2+) as a cofactor.

The catalysed reaction is Endonucleolytic cleavage to 5'-phosphomonoester.. Functionally, endonuclease that specifically degrades the RNA of RNA-DNA hybrids. The sequence is that of Ribonuclease H (RNH1) from Crithidia fasciculata.